The primary structure comprises 399 residues: Putative gustatory receptor 59e (399 aa).

At 1–33 (MDSSYWENLLLTINRFLGVYPSGRVGVLRWLHT) the chain is on the cytoplasmic side. A helical membrane pass occupies residues 34-54 (LWSLFLLMYIWTGSIVKCLEF). Residues 55-65 (TVEIPTIEKLL) are Extracellular-facing. The chain crosses the membrane as a helical span at residues 66-86 (YLMEFPGNMATIAILVYYAVL). At 87 to 120 (NRPLAHGAELQIERIITGLKGKAKRLVYKRHGQR) the chain is on the cytoplasmic side. The chain crosses the membrane as a helical span at residues 121–141 (TLHLMATTLVFHGLCVLVDVV). The Extracellular segment spans residues 142 to 206 (NYDFEFWTTW…RPPQGSTKLD (65 aa)). Residues 207–227 (ACYESAFAVLVDAGGGSALMI) form a helical membrane-spanning segment. At 228–250 (EEMRYTCNLIEQVHSQFLLRFGL) the chain is on the cytoplasmic side. A helical transmembrane segment spans residues 251–271 (YLVLNLLNSLVSICVELYLIF). Residues 272 to 282 (NFFETPLWEES) are Extracellular-facing. Residues 283–303 (VLLVYRLLWLAMHGGRIWFIL) form a helical membrane-spanning segment. The Cytoplasmic portion of the chain corresponds to 304 to 361 (SVNEQILEQKCNLCQLLNELEVCSSRLQRTINRFLLQLQRSIDQPLEACGIVTLDTRS). The chain crosses the membrane as a helical span at residues 362-382 (LGGFIGVLMAIVIFLIQIGLG). N-linked (GlcNAc...) asparagine glycosylation is found at N383 and N392. Over 383 to 399 (NKSLMGVALNRSNWVYV) the chain is Extracellular.

This sequence belongs to the insect chemoreceptor superfamily. Gustatory receptor (GR) family. Gr10a subfamily. Expressed in the adult labellar chemosensory neurons. In larvae, is expressed in neurons of the terminal external chemosensory organ.

Its subcellular location is the cell membrane. Probable gustatory receptor which mediates acceptance or avoidance behavior, depending on its substrates. This is Putative gustatory receptor 59e (Gr59e) from Drosophila melanogaster (Fruit fly).